The primary structure comprises 157 residues: Ribonuclease H (157 aa).

The 142-residue stretch at 1 to 142 folds into the RNase H type-1 domain; that stretch reads MKKKIKIFID…CDFLAKISAK (142 aa). Positions 10, 48, 70, and 134 each coordinate Mg(2+).

Belongs to the RNase H family. Monomer. The cofactor is Mg(2+).

The protein resides in the cytoplasm. It catalyses the reaction Endonucleolytic cleavage to 5'-phosphomonoester.. Endonuclease that specifically degrades the RNA of RNA-DNA hybrids. This is Ribonuclease H from Wigglesworthia glossinidia brevipalpis.